A 101-amino-acid polypeptide reads, in one-letter code: Aspartyl/glutamyl-tRNA(Asn/Gln) amidotransferase subunit C (101 aa).

Positions 75-101 (QEALSGAPDAEEQRFRVPRILDEDVAS) are disordered. Over residues 85-101 (EEQRFRVPRILDEDVAS) the composition is skewed to basic and acidic residues.

This sequence belongs to the GatC family. As to quaternary structure, heterotrimer of A, B and C subunits.

The enzyme catalyses L-glutamyl-tRNA(Gln) + L-glutamine + ATP + H2O = L-glutaminyl-tRNA(Gln) + L-glutamate + ADP + phosphate + H(+). It carries out the reaction L-aspartyl-tRNA(Asn) + L-glutamine + ATP + H2O = L-asparaginyl-tRNA(Asn) + L-glutamate + ADP + phosphate + 2 H(+). Its function is as follows. Allows the formation of correctly charged Asn-tRNA(Asn) or Gln-tRNA(Gln) through the transamidation of misacylated Asp-tRNA(Asn) or Glu-tRNA(Gln) in organisms which lack either or both of asparaginyl-tRNA or glutaminyl-tRNA synthetases. The reaction takes place in the presence of glutamine and ATP through an activated phospho-Asp-tRNA(Asn) or phospho-Glu-tRNA(Gln). In Salinispora arenicola (strain CNS-205), this protein is Aspartyl/glutamyl-tRNA(Asn/Gln) amidotransferase subunit C.